Consider the following 491-residue polypeptide: Argininosuccinate lyase (491 aa).

It belongs to the lyase 1 family. Argininosuccinate lyase subfamily.

It localises to the cytoplasm. The enzyme catalyses 2-(N(omega)-L-arginino)succinate = fumarate + L-arginine. It functions in the pathway amino-acid biosynthesis; L-arginine biosynthesis; L-arginine from L-ornithine and carbamoyl phosphate: step 3/3. In Methanosarcina mazei (strain ATCC BAA-159 / DSM 3647 / Goe1 / Go1 / JCM 11833 / OCM 88) (Methanosarcina frisia), this protein is Argininosuccinate lyase.